Consider the following 637-residue polypeptide: Threonine--tRNA ligase (637 aa).

One can recognise a TGS domain in the interval 1-61 (MIKVTLKDGK…DKDCNLEILT (61 aa)). Residues 242–532 (DHRKIGKELD…LIEHYAGAFP (291 aa)) are catalytic. Residues cysteine 333, histidine 384, and histidine 509 each coordinate Zn(2+).

Belongs to the class-II aminoacyl-tRNA synthetase family. As to quaternary structure, homodimer. The cofactor is Zn(2+).

It is found in the cytoplasm. The catalysed reaction is tRNA(Thr) + L-threonine + ATP = L-threonyl-tRNA(Thr) + AMP + diphosphate + H(+). Catalyzes the attachment of threonine to tRNA(Thr) in a two-step reaction: L-threonine is first activated by ATP to form Thr-AMP and then transferred to the acceptor end of tRNA(Thr). Also edits incorrectly charged L-seryl-tRNA(Thr). This is Threonine--tRNA ligase from Clostridium acetobutylicum (strain ATCC 824 / DSM 792 / JCM 1419 / IAM 19013 / LMG 5710 / NBRC 13948 / NRRL B-527 / VKM B-1787 / 2291 / W).